The sequence spans 323 residues: Serine/threonine-protein phosphatase PP1-gamma catalytic subunit (323 aa).

Aspartate 64, histidine 66, aspartate 92, and asparagine 124 together coordinate Mn(2+). Histidine 125 serves as the catalytic Proton donor. 2 residues coordinate Mn(2+): histidine 173 and histidine 248. Residues 300–323 form a disordered region; that stretch reads EKKKPNASRPVTPPRGMITKQAKK.

It belongs to the PPP phosphatase family. PP-1 subfamily. PP1 comprises a catalytic subunit, ppp1c1, ppp1cb or ppp1cc, which is folded into its native form by inhibitor 2 and glycogen synthetase kinase 3, and then is complexed to one or several targeting or regulatory subunits. It depends on Mn(2+) as a cofactor.

The protein localises to the cytoplasm. It localises to the nucleus. Its subcellular location is the cleavage furrow. The protein resides in the nucleolus. It is found in the nucleoplasm. The protein localises to the chromosome. It localises to the centromere. Its subcellular location is the kinetochore. The protein resides in the nucleus speckle. It is found in the midbody. The protein localises to the mitochondrion. It localises to the cytoskeleton. Its subcellular location is the microtubule organizing center. The catalysed reaction is O-phospho-L-seryl-[protein] + H2O = L-seryl-[protein] + phosphate. It catalyses the reaction O-phospho-L-threonyl-[protein] + H2O = L-threonyl-[protein] + phosphate. Functionally, protein phosphatase 1 (PP1) is essential for cell division, and participates in the regulation of glycogen metabolism, muscle contractility and protein synthesis. Promotes nuclear envelope reassembly by targeting nuclear membrane vesicles to chromatin at the end of mitosis. Acts by dephosphorylating membrane proteins such as lamin B receptor (lbr) to regulate the binding of membrane proteins to chromatin. This chain is Serine/threonine-protein phosphatase PP1-gamma catalytic subunit, found in Xenopus tropicalis (Western clawed frog).